The sequence spans 225 residues: Urease accessory protein UreF (225 aa).

Belongs to the UreF family. As to quaternary structure, ureD, UreF and UreG form a complex that acts as a GTP-hydrolysis-dependent molecular chaperone, activating the urease apoprotein by helping to assemble the nickel containing metallocenter of UreC. The UreE protein probably delivers the nickel.

The protein localises to the cytoplasm. Functionally, required for maturation of urease via the functional incorporation of the urease nickel metallocenter. The sequence is that of Urease accessory protein UreF from Picosynechococcus sp. (strain ATCC 27264 / PCC 7002 / PR-6) (Agmenellum quadruplicatum).